We begin with the raw amino-acid sequence, 196 residues long: Probable GTP-binding protein EngB (196 aa).

The region spanning 22–196 (NLPEIALAGR…GNWIEDKISQ (175 aa)) is the EngB-type G domain. Residues 30–37 (GRSNVGKS), 57–61 (GKTQT), 75–78 (DVPG), 142–145 (TKMD), and 175–177 (FSS) each bind GTP. Residues serine 37 and threonine 59 each contribute to the Mg(2+) site.

It belongs to the TRAFAC class TrmE-Era-EngA-EngB-Septin-like GTPase superfamily. EngB GTPase family. It depends on Mg(2+) as a cofactor.

Necessary for normal cell division and for the maintenance of normal septation. The protein is Probable GTP-binding protein EngB of Lactobacillus acidophilus (strain ATCC 700396 / NCK56 / N2 / NCFM).